The primary structure comprises 324 residues: Probable UDP-sugar transporter protein SLC35A4 (324 aa).

Over 1 to 18 (MSVEDGGMPGLGRPRQAR) the chain is Cytoplasmic. Residues 19 to 39 (WTLMLLLSTAMYGAHAPLLAL) traverse the membrane as a helical segment. Residues 40–52 (CHVDGRVPFRPSS) are Lumenal-facing. A helical membrane pass occupies residues 53-73 (AVLLTELTKLLLCAFSLLVGW). Residues 74-85 (QAWPQGPPPWRQ) lie on the Cytoplasmic side of the membrane. A helical membrane pass occupies residues 86 to 106 (AAPFALSALLYGANNNLVIYL). Residues 107 to 142 (QRYMDPSTYQVLSNLKIGSTAVLYCLCLRHRLSVRQ) lie on the Lumenal side of the membrane. A helical membrane pass occupies residues 143–163 (GLALLLLMAAGACYAAGGLQV). Residues 164-180 (PGNTLPSPPPAAAASPM) are Cytoplasmic-facing. The helical transmembrane segment at 181–201 (PLHITPLGLLLLILYCLISGL) threads the bilayer. Residues 202-214 (SSVYTELLMKRQR) lie on the Lumenal side of the membrane. Residues 215-235 (LPLALQNLFLYTFGVLLNLGL) traverse the membrane as a helical segment. The Cytoplasmic portion of the chain corresponds to 236-250 (HAGGGSGPGLLEGFS). A helical membrane pass occupies residues 251-271 (GWAALVVLSQALNGLLMSAVM). Topologically, residues 272–275 (KHGS) are lumenal. A helical transmembrane segment spans residues 276 to 298 (SITRLFVVSCSLVVNAVLSAVLL). Over 299 to 324 (RLQLTAAFFLATLLIGLAMRLYYGSR) the chain is Cytoplasmic.

This sequence belongs to the nucleotide-sugar transporter family. SLC35A subfamily. In terms of assembly, found in a complex with SLC35A2 and SLC35A3.

The protein resides in the golgi apparatus membrane. The catalysed reaction is CDP-L-ribitol(in) + CDP(out) = CDP-L-ribitol(out) + CDP(in). In terms of biological role, mediates the transport of CDP-ribitol. Does not exhibit CMP-sialic acid, UDP-galactose and UDP-N-acetylglucosamine transport activity. The protein is Probable UDP-sugar transporter protein SLC35A4 of Homo sapiens (Human).